Here is a 384-residue protein sequence, read N- to C-terminus: Lipid-A-disaccharide synthase (384 aa).

The protein belongs to the LpxB family.

The catalysed reaction is a lipid X + a UDP-2-N,3-O-bis[(3R)-3-hydroxyacyl]-alpha-D-glucosamine = a lipid A disaccharide + UDP + H(+). It functions in the pathway bacterial outer membrane biogenesis; LPS lipid A biosynthesis. Functionally, condensation of UDP-2,3-diacylglucosamine and 2,3-diacylglucosamine-1-phosphate to form lipid A disaccharide, a precursor of lipid A, a phosphorylated glycolipid that anchors the lipopolysaccharide to the outer membrane of the cell. The chain is Lipid-A-disaccharide synthase from Neisseria meningitidis serogroup C / serotype 2a (strain ATCC 700532 / DSM 15464 / FAM18).